Consider the following 268-residue polypeptide: Tryptophan synthase alpha chain (268 aa).

Active-site proton acceptor residues include Glu-49 and Asp-60.

Belongs to the TrpA family. As to quaternary structure, tetramer of two alpha and two beta chains.

It catalyses the reaction (1S,2R)-1-C-(indol-3-yl)glycerol 3-phosphate + L-serine = D-glyceraldehyde 3-phosphate + L-tryptophan + H2O. It functions in the pathway amino-acid biosynthesis; L-tryptophan biosynthesis; L-tryptophan from chorismate: step 5/5. In terms of biological role, the alpha subunit is responsible for the aldol cleavage of indoleglycerol phosphate to indole and glyceraldehyde 3-phosphate. This chain is Tryptophan synthase alpha chain, found in Sodalis glossinidius (strain morsitans).